A 194-amino-acid polypeptide reads, in one-letter code: 23 kDa U4/U6.U5 small nuclear ribonucleoprotein component (194 aa).

The segment at 80-104 (FYCDICNLTFKDTLQYIDHLNHKVH) adopts a C2H2-type zinc-finger fold.

In terms of assembly, component of the U4/U6-U5 tri-snRNP complex composed of the U4, U6 and U5 snRNAs and at least PRP3, PRP4, PRP6, PRP8, PRP18, PRP31, PRP38, SNU13, SNU23, SNU66, SNU114, SPP381, SMB1, SMD1, SMD2, SMD3, SMX2, SMX3, LSM2, LSM3, LSM4, LSM5, LSM6, LSM7, LSM8, BRR2 and DIB1.

The protein resides in the nucleus. Functionally, participates in pre-mRNA splicing. Part of the U4/U5/U6 tri-snRNP complex, one of the building blocks of the spliceosome. The protein is 23 kDa U4/U6.U5 small nuclear ribonucleoprotein component (SNU23) of Saccharomyces cerevisiae (strain ATCC 204508 / S288c) (Baker's yeast).